A 315-amino-acid chain; its full sequence is Acetyl-coenzyme A carboxylase carboxyl transferase subunit alpha (315 aa).

In terms of domain architecture, CoA carboxyltransferase C-terminal spans 38–292 (RLQKKSNELT…KLRLKEDLAE (255 aa)).

It belongs to the AccA family. In terms of assembly, acetyl-CoA carboxylase is a heterohexamer composed of biotin carboxyl carrier protein (AccB), biotin carboxylase (AccC) and two subunits each of ACCase subunit alpha (AccA) and ACCase subunit beta (AccD).

It localises to the cytoplasm. It catalyses the reaction N(6)-carboxybiotinyl-L-lysyl-[protein] + acetyl-CoA = N(6)-biotinyl-L-lysyl-[protein] + malonyl-CoA. Its pathway is lipid metabolism; malonyl-CoA biosynthesis; malonyl-CoA from acetyl-CoA: step 1/1. Functionally, component of the acetyl coenzyme A carboxylase (ACC) complex. First, biotin carboxylase catalyzes the carboxylation of biotin on its carrier protein (BCCP) and then the CO(2) group is transferred by the carboxyltransferase to acetyl-CoA to form malonyl-CoA. This Haemophilus influenzae (strain PittEE) protein is Acetyl-coenzyme A carboxylase carboxyl transferase subunit alpha.